The sequence spans 765 residues: Protein transport protein Sec23A (765 aa).

Residues C61, C66, C85, and C88 each coordinate Zn(2+). The Gelsolin-like repeat unit spans residues 632–718; that stretch reads PEPVLLDSSS…EHGGSQARFL (87 aa).

This sequence belongs to the SEC23/SEC24 family. SEC23 subfamily. As to quaternary structure, COPII is composed of at least five proteins: the Sec23/24 complex, the Sec13/31 complex and Sar1.

Its subcellular location is the cytoplasmic vesicle. The protein resides in the COPII-coated vesicle membrane. It localises to the endoplasmic reticulum membrane. It is found in the cytoplasm. The protein localises to the cytosol. Functionally, component of the coat protein complex II (COPII) which promotes the formation of transport vesicles from the endoplasmic reticulum (ER). The coat has two main functions, the physical deformation of the endoplasmic reticulum membrane into vesicles and the selection of cargo molecules for their transport to the Golgi complex. This Xenopus tropicalis (Western clawed frog) protein is Protein transport protein Sec23A.